A 138-amino-acid polypeptide reads, in one-letter code: Large ribosomal subunit protein bL19 (138 aa).

This sequence belongs to the bacterial ribosomal protein bL19 family.

This protein is located at the 30S-50S ribosomal subunit interface and may play a role in the structure and function of the aminoacyl-tRNA binding site. This Rickettsia typhi (strain ATCC VR-144 / Wilmington) protein is Large ribosomal subunit protein bL19.